A 387-amino-acid chain; its full sequence is ATP phosphoribosyltransferase regulatory subunit (387 aa).

Belongs to the class-II aminoacyl-tRNA synthetase family. HisZ subfamily. As to quaternary structure, heteromultimer composed of HisG and HisZ subunits.

The protein localises to the cytoplasm. Its pathway is amino-acid biosynthesis; L-histidine biosynthesis; L-histidine from 5-phospho-alpha-D-ribose 1-diphosphate: step 1/9. Functionally, required for the first step of histidine biosynthesis. May allow the feedback regulation of ATP phosphoribosyltransferase activity by histidine. This chain is ATP phosphoribosyltransferase regulatory subunit, found in Ralstonia pickettii (strain 12J).